Consider the following 180-residue polypeptide: Large ribosomal subunit protein uL6 (180 aa).

It belongs to the universal ribosomal protein uL6 family. In terms of assembly, part of the 50S ribosomal subunit.

Functionally, this protein binds to the 23S rRNA, and is important in its secondary structure. It is located near the subunit interface in the base of the L7/L12 stalk, and near the tRNA binding site of the peptidyltransferase center. In Anaeromyxobacter dehalogenans (strain 2CP-C), this protein is Large ribosomal subunit protein uL6.